The sequence spans 405 residues: Polyketide biosynthesis cytochrome P450 PksS (405 aa).

Residues 231–251 form a helical membrane-spanning segment; the sequence is LYSMLFLLVVAGLETTVNLLG. Residue cysteine 352 coordinates heme.

It belongs to the cytochrome P450 family.

It localises to the cell membrane. The protein operates within antibiotic biosynthesis; bacillaene biosynthesis. Functionally, involved in the metabolism of the antibiotic polyketide bacillaene which is involved in secondary metabolism. The substrate is dihydrobacillaene. The protein is Polyketide biosynthesis cytochrome P450 PksS (pksS) of Bacillus subtilis (strain 168).